The chain runs to 107 residues: Small ribosomal subunit protein uS17 (107 aa).

This sequence belongs to the universal ribosomal protein uS17 family. Part of the 30S ribosomal subunit.

In terms of biological role, one of the primary rRNA binding proteins, it binds specifically to the 5'-end of 16S ribosomal RNA. This is Small ribosomal subunit protein uS17 from Thermotoga petrophila (strain ATCC BAA-488 / DSM 13995 / JCM 10881 / RKU-1).